The following is a 335-amino-acid chain: Zinc finger protein 396 (335 aa).

In terms of domain architecture, SCAN box spans 52–134; the sequence is RQQFRQFGYQ…TMLEDVEREL (83 aa). C2H2-type zinc fingers lie at residues 251-273, 279-301, and 307-329; these read QKCD…QRIH, YACD…RRTH, and YKCH…RKRH.

The protein belongs to the krueppel C2H2-type zinc-finger protein family. Isoforms 1 and 2 can both homo- and hetero-associate. Expressed strongly in liver, moderately in skeletal muscle and weakly in kidney, pancreas, spleen and prostate.

Its subcellular location is the nucleus. It localises to the cytoplasm. Functionally, isoform 1 and isoform 2 act as DNA-dependent transcriptional repressors. The sequence is that of Zinc finger protein 396 (ZNF396) from Homo sapiens (Human).